The sequence spans 233 residues: H-2 class II histocompatibility antigen, A-S alpha chain (233 aa).

The tract at residues 1–88 (EDDIEADHVG…KRSNSTPATN (88 aa)) is alpha-1. Residues 1 to 195 (EDDIEADHVG…IPAPMSELTE (195 aa)) are Extracellular-facing. An alpha-2 region spans residues 89 to 182 (EAPQATVFPK…GLEEPVLKHW (94 aa)). The region spanning 91–183 (PQATVFPKSP…LEEPVLKHWE (93 aa)) is the Ig-like C1-type domain. Cysteines 111 and 167 form a disulfide. N-linked (GlcNAc...) asparagine glycosylation is present at asparagine 122. Residues 183-195 (EPEIPAPMSELTE) form a connecting peptide region. A helical transmembrane segment spans residues 196–221 (TVVCALGLSVGLVGIVVGTIFIIQGL). At 222–233 (RSGGTSRHPGPL) the chain is on the cytoplasmic side.

The protein belongs to the MHC class II family.

Its subcellular location is the membrane. This chain is H-2 class II histocompatibility antigen, A-S alpha chain (H2-Aa), found in Mus musculus (Mouse).